The following is a 132-amino-acid chain: Fatty acid-binding protein, intestinal (132 aa).

A2 bears the N-acetylalanine mark. Residues W83 and R107 each coordinate hexadecanoate. Positions 83 and 107 each coordinate tetradecanoate.

Belongs to the calycin superfamily. Fatty-acid binding protein (FABP) family. In terms of tissue distribution, expressed in the small intestine. Highest expression levels in the proximal ileum.

The protein resides in the cytoplasm. Its function is as follows. FABPs are thought to play a role in the intracellular transport of long-chain fatty acids and their acyl-CoA esters. FABP2 is probably involved in triglyceride-rich lipoprotein synthesis. Binds saturated long-chain fatty acids with a high affinity, but binds with a lower affinity to unsaturated long-chain fatty acids. FABP2 may also help maintain energy homeostasis by functioning as a lipid sensor. This is Fatty acid-binding protein, intestinal (Fabp2) from Mus musculus (Mouse).